We begin with the raw amino-acid sequence, 2108 residues long: General negative regulator of transcription subunit 1 (2108 aa).

Coiled coils occupy residues 795–813 and 1021–1046; these read NVTLANLNNKVDELKKSLT and MQQHQQQMLIYQQRQQQQQQRQQQQQ. Residues 1323 to 1352 are disordered; the sequence is QQQQLQKSRLNQPSQSAQPPGVNVPNPQGG. Residues 1329 to 1339 are compositionally biased toward polar residues; that stretch reads KSRLNQPSQSA. Low complexity predominate over residues 1340-1352; it reads QPPGVNVPNPQGG. A Phosphothreonine modification is found at Thr2102.

This sequence belongs to the CNOT1 family. As to quaternary structure, forms a NOT protein complex that comprises NOT1, NOT2, NOT3, NOT4 and NOT5. Subunit of the 1.0 MDa CCR4-NOT core complex that contains CCR4, CAF1, NOT1, NOT2, NOT3, NOT4, NOT5, CAF40 and CAF130. In the complex interacts with CCR4, POP2, NOT2, NOT4 and NOT5. The core complex probably is part of a less characterized 1.9 MDa CCR4-NOT complex.

The protein localises to the cytoplasm. The protein resides in the nucleus. Functionally, acts as a component of the CCR4-NOT core complex, which in the nucleus seems to be a general transcription factor, and in the cytoplasm the major mRNA deadenylase involved in mRNA turnover. The NOT protein subcomplex negatively regulates the basal and activated transcription of many genes. Preferentially affects TC-type TATA element-dependent transcription. Could directly or indirectly inhibit component(s) of the general transcription machinery. The polypeptide is General negative regulator of transcription subunit 1 (CDC39) (Saccharomyces cerevisiae (strain ATCC 204508 / S288c) (Baker's yeast)).